Consider the following 252-residue polypeptide: Phosphoglycolate phosphatase (252 aa).

The active-site Nucleophile is Asp-13. Asp-13, Asp-15, and Asp-192 together coordinate Mg(2+).

The protein belongs to the HAD-like hydrolase superfamily. CbbY/CbbZ/Gph/YieH family. In terms of assembly, monomer. It depends on Mg(2+) as a cofactor. Chloride serves as cofactor.

It carries out the reaction 2-phosphoglycolate + H2O = glycolate + phosphate. Its pathway is organic acid metabolism; glycolate biosynthesis; glycolate from 2-phosphoglycolate: step 1/1. In terms of biological role, specifically catalyzes the dephosphorylation of 2-phosphoglycolate. Is involved in the dissimilation of the intracellular 2-phosphoglycolate formed during the DNA repair of 3'-phosphoglycolate ends, a major class of DNA lesions induced by oxidative stress. This chain is Phosphoglycolate phosphatase, found in Salmonella typhi.